Consider the following 178-residue polypeptide: ATP synthase subunit b (178 aa).

A helical membrane pass occupies residues 30 to 50 (FFFVLAIFLIVLAVIGTFVVP).

This sequence belongs to the ATPase B chain family. In terms of assembly, F-type ATPases have 2 components, F(1) - the catalytic core - and F(0) - the membrane proton channel. F(1) has five subunits: alpha(3), beta(3), gamma(1), delta(1), epsilon(1). F(0) has three main subunits: a(1), b(2) and c(10-14). The alpha and beta chains form an alternating ring which encloses part of the gamma chain. F(1) is attached to F(0) by a central stalk formed by the gamma and epsilon chains, while a peripheral stalk is formed by the delta and b chains.

The protein localises to the cell membrane. Functionally, f(1)F(0) ATP synthase produces ATP from ADP in the presence of a proton or sodium gradient. F-type ATPases consist of two structural domains, F(1) containing the extramembraneous catalytic core and F(0) containing the membrane proton channel, linked together by a central stalk and a peripheral stalk. During catalysis, ATP synthesis in the catalytic domain of F(1) is coupled via a rotary mechanism of the central stalk subunits to proton translocation. Its function is as follows. Component of the F(0) channel, it forms part of the peripheral stalk, linking F(1) to F(0). This chain is ATP synthase subunit b, found in Mycobacterium avium (strain 104).